The following is a 643-amino-acid chain: Alpha-dioxygenase 1 (643 aa).

The active-site Proton acceptor is histidine 167. Aspartate 168 contributes to the Ca(2+) binding site. A heme b-binding site is contributed by histidine 172. Ca(2+) is bound by residues threonine 220, tryptophan 222, aspartate 224, and serine 226. The heme b site is built by histidine 392, arginine 489, and arginine 493.

This sequence belongs to the peroxidase family. Heme b is required as a cofactor. Ca(2+) serves as cofactor.

In terms of biological role, alpha-dioxygenase that catalyzes the primary oxygenation step of a variety of 14-20 carbon fatty acids, containing up to three unsaturated bonds, into their corresponding 2R-hydroperoxides. Involved in the production of oxylipins that function in cell signaling, wound healing, and protection from infection. The lipid-derived signaling pathway is involved in the initial response of hot pepper plants to pathogen infection. This chain is Alpha-dioxygenase 1, found in Capsicum annuum (Capsicum pepper).